Consider the following 417-residue polypeptide: mRNA cap guanine-N(7) methyltransferase (417 aa).

The region spanning 129–412 (SPIIKLRNFN…LYTVFAFKKV (284 aa)) is the mRNA cap 0 methyltransferase domain. 138-139 (NN) contributes to the mRNA binding site. S-adenosyl-L-methionine-binding residues include Lys-142, Gly-160, Asp-182, Asp-211, Gln-237, and Tyr-242.

It belongs to the class I-like SAM-binding methyltransferase superfamily. mRNA cap 0 methyltransferase family.

The protein resides in the nucleus. The enzyme catalyses a 5'-end (5'-triphosphoguanosine)-ribonucleoside in mRNA + S-adenosyl-L-methionine = a 5'-end (N(7)-methyl 5'-triphosphoguanosine)-ribonucleoside in mRNA + S-adenosyl-L-homocysteine. Functionally, responsible for methylating the 5'-cap structure of mRNAs. This chain is mRNA cap guanine-N(7) methyltransferase (ABD1), found in Candida glabrata (strain ATCC 2001 / BCRC 20586 / JCM 3761 / NBRC 0622 / NRRL Y-65 / CBS 138) (Yeast).